The chain runs to 460 residues: Zinc transporter 6 (460 aa).

Over 1–33 the chain is Cytoplasmic; it reads MGTIHLFRKPQRSFFGKLLQEFRLVAADRRSWK. Residues 34–54 form a helical membrane-spanning segment; that stretch reads ILLFGAINVLCTGFLLMWCSS. Residues 55–64 lie on the Extracellular side of the membrane; sequence TNSIALTAYT. The chain crosses the membrane as a helical span at residues 65–85; sequence YLTIFDLFSLITCLISYWVMM. The Cytoplasmic segment spans residues 86-98; it reads RKPSPVYSFGFER. Residues 99–119 form a helical membrane-spanning segment; sequence LEVLAVFASTVLAQLGALFIL. Topologically, residues 120-134 are extracellular; the sequence is KESAERFLEQPEIHT. The chain crosses the membrane as a helical span at residues 135–155; that stretch reads GRLLVGTFVALSFNLFTMLSI. At 156-200 the chain is on the cytoplasmic side; sequence RNKPFAYVSEAASTSWLQEHVADLSRSLCGLIPGLSSIFLPRMNP. A helical membrane pass occupies residues 201–221; the sequence is FVLIDLAGAFALCITYMLIEI. The Extracellular segment spans residues 222–223; it reads NN. The chain crosses the membrane as a helical span at residues 224–244; it reads YFAVDTASAIAIALMTFGTMY. Residues 245–460 are Cytoplasmic-facing; the sequence is PMSVYSGKVL…GINRMGQPRP (216 aa). The segment at 371-390 is disordered; the sequence is TPVTSTPAKPSSPPPEFSFN.

The protein belongs to the cation diffusion facilitator (CDF) transporter (TC 2.A.4) family. SLC30A subfamily. Heterodimer with SLC30A5; form a functional zinc ion transmembrane transporter. As to expression, expressed in brain and liver, and to a lower extent also in lung. Highly expressed in brain (at protein level).

Its subcellular location is the golgi apparatus. The protein resides in the trans-Golgi network membrane. In terms of biological role, has probably no intrinsic transporter activity but together with SLC30A5 forms a functional zinc ion:proton antiporter heterodimer, mediating zinc entry into the lumen of organelles along the secretory pathway. As part of that zinc ion:proton antiporter, contributes to zinc ion homeostasis within the early secretory pathway and regulates the activation and folding of enzymes like alkaline phosphatases and enzymes involved in phosphatidylinositol glycan anchor biosynthesis. The protein is Zinc transporter 6 (Slc30a6) of Mus musculus (Mouse).